The primary structure comprises 100 residues: Aspartyl/glutamyl-tRNA(Asn/Gln) amidotransferase subunit C (100 aa).

The protein belongs to the GatC family. As to quaternary structure, heterotrimer of A, B and C subunits.

The enzyme catalyses L-glutamyl-tRNA(Gln) + L-glutamine + ATP + H2O = L-glutaminyl-tRNA(Gln) + L-glutamate + ADP + phosphate + H(+). It catalyses the reaction L-aspartyl-tRNA(Asn) + L-glutamine + ATP + H2O = L-asparaginyl-tRNA(Asn) + L-glutamate + ADP + phosphate + 2 H(+). Allows the formation of correctly charged Asn-tRNA(Asn) or Gln-tRNA(Gln) through the transamidation of misacylated Asp-tRNA(Asn) or Glu-tRNA(Gln) in organisms which lack either or both of asparaginyl-tRNA or glutaminyl-tRNA synthetases. The reaction takes place in the presence of glutamine and ATP through an activated phospho-Asp-tRNA(Asn) or phospho-Glu-tRNA(Gln). The chain is Aspartyl/glutamyl-tRNA(Asn/Gln) amidotransferase subunit C from Streptococcus pneumoniae serotype 19F (strain G54).